A 648-amino-acid polypeptide reads, in one-letter code: Protein teflon (648 aa).

The C2H2-type 1 zinc-finger motif lies at 33-56; the sequence is LYCHFCRDLFTQLPEFLRHLQGAH. 2 disordered regions span residues 76–127 and 146–170; these read SGEQ…GSQN and EHINDKLKPENGGFKGPRKKANSES. Residues 85–94 are compositionally biased toward polar residues; sequence VGHNSSSSDS. Over residues 96-107 the composition is skewed to basic and acidic residues; it reads GLAKSEDSRATE. The segment at 598 to 620 adopts a C2H2-type 2; degenerate zinc-finger fold; that stretch reads YFCKCCDDIFTLNEDYIRHLVSQ. The C2H2-type 3 zinc finger occupies 624–647; that stretch reads YQCTKCIKTFKYQGHYDKHMRTVH.

It belongs to the Teflon family.

It localises to the nucleus. The protein localises to the chromosome. In terms of biological role, specifically required in males for proper segregation of autosomal bivalents at meiosis I. Expression is required in the male germ line prior to spermatocyte stage S4. May have a role as a bridging molecule maintaining adhesion to hold autosome bivalents together via heterochromatic connections. The sequence is that of Protein teflon from Drosophila yakuba (Fruit fly).